The following is a 519-amino-acid chain: Acetylcholine receptor subunit gamma (519 aa).

An N-terminal signal peptide occupies residues 1 to 22; it reads MQGGQRPHLLLLLLAVCLGAQS. Topologically, residues 23-240 are extracellular; the sequence is RNQEERLLAD…VVFYLLIQRK (218 aa). N-linked (GlcNAc...) asparagine glycosylation is found at Asn-52 and Asn-163. An intrachain disulfide couples Cys-150 to Cys-164. A run of 3 helical transmembrane segments spans residues 241 to 265, 274 to 292, and 308 to 329; these read PLFY…IYFL, CTVA…FLVA, and YLTF…VLNV. At 330-476 the chain is on the cytoplasmic side; the sequence is SLRSPHTHSM…WLLVGRVLDR (147 aa). Residues 477 to 497 form a helical membrane-spanning segment; sequence VCFLAMLSLFICGTAGIFLMA.

It belongs to the ligand-gated ion channel (TC 1.A.9) family. Acetylcholine receptor (TC 1.A.9.1) subfamily. Gamma/CHRNG sub-subfamily. Pentamer of two alpha chains, and one each of the beta, delta, and gamma (in immature muscle) or epsilon (in mature muscle) chains. At least in myotubes of skeletal muscle.

It is found in the postsynaptic cell membrane. The protein localises to the cell membrane. The catalysed reaction is K(+)(in) = K(+)(out). It carries out the reaction Na(+)(in) = Na(+)(out). After binding acetylcholine, the AChR responds by an extensive change in conformation that affects all subunits and leads to opening of an ion-conducting channel across the plasma membrane. This Mus musculus (Mouse) protein is Acetylcholine receptor subunit gamma (Chrng).